We begin with the raw amino-acid sequence, 212 residues long: uncharacterized protein (212 aa).

Disordered regions lie at residues 1-148 (MEKD…LNDL) and 168-190 (EVVT…LSED). Positions 61-70 (KELESEDQGK) are enriched in basic and acidic residues. Positions 71–85 (DPSSNAEDASCQKNL) are enriched in polar residues. 3 stretches are compositionally biased toward basic and acidic residues: residues 99 to 115 (LGHE…KSDL), 124 to 144 (EGEH…ESIK), and 168 to 180 (EVVT…EKPS).

This is an uncharacterized protein from Homo sapiens (Human).